Consider the following 321-residue polypeptide: Translation initiation factor eIF2B subunit alpha (321 aa).

It belongs to the eIF-2B alpha/beta/delta subunits family. As to quaternary structure, component of the translation initiation factor 2B (eIF2B) complex which is a heterodecamer of two sets of five different subunits: alpha, beta, gamma, delta and epsilon. Subunits alpha, beta and delta comprise a regulatory subcomplex and subunits epsilon and gamma comprise a catalytic subcomplex. Within the complex, the hexameric regulatory complex resides at the center, with the two heterodimeric catalytic subcomplexes bound on opposite sides.

The protein resides in the cytoplasm. Its subcellular location is the cytosol. Its function is as follows. Acts as a component of the translation initiation factor 2B (eIF2B) complex, which catalyzes the exchange of GDP for GTP on eukaryotic initiation factor 2 (eIF2) gamma subunit. Its guanine nucleotide exchange factor activity is repressed when bound to eIF2 complex phosphorylated on the alpha subunit, thereby limiting the amount of methionyl-initiator methionine tRNA available to the ribosome and consequently global translation is repressed. This chain is Translation initiation factor eIF2B subunit alpha (eif2b1), found in Dictyostelium discoideum (Social amoeba).